Reading from the N-terminus, the 308-residue chain is D-alanine--D-alanine ligase (308 aa).

The ATP-grasp domain occupies 109–302; that stretch reads KAAYAAAGLP…FGALCRWIVE (194 aa). Residue 136-186 coordinates ATP; sequence MPPPYVIKPYNEGSSVGVYLVPEGAEAAPELADDLPDTLMVEAFVPGRELT. Residues Asp253, Glu269, and Asn271 each contribute to the Mg(2+) site.

Belongs to the D-alanine--D-alanine ligase family. Requires Mg(2+) as cofactor. It depends on Mn(2+) as a cofactor.

The protein localises to the cytoplasm. It catalyses the reaction 2 D-alanine + ATP = D-alanyl-D-alanine + ADP + phosphate + H(+). It functions in the pathway cell wall biogenesis; peptidoglycan biosynthesis. Its function is as follows. Cell wall formation. The polypeptide is D-alanine--D-alanine ligase (Dinoroseobacter shibae (strain DSM 16493 / NCIMB 14021 / DFL 12)).